The following is a 115-amino-acid chain: NADH-ubiquinone oxidoreductase chain 3 (115 aa).

Transmembrane regions (helical) follow at residues 4 to 24 (FMALSVNIILSTCLILIAFWL), 55 to 75 (FFLVAITFLLFDLEIALLLPL), and 87 to 107 (MMLTAFILVSILALGLAYEWV).

This sequence belongs to the complex I subunit 3 family. Core subunit of respiratory chain NADH dehydrogenase (Complex I) which is composed of 45 different subunits. Interacts with TMEM186. Interacts with TMEM242.

Its subcellular location is the mitochondrion inner membrane. The catalysed reaction is a ubiquinone + NADH + 5 H(+)(in) = a ubiquinol + NAD(+) + 4 H(+)(out). Functionally, core subunit of the mitochondrial membrane respiratory chain NADH dehydrogenase (Complex I) which catalyzes electron transfer from NADH through the respiratory chain, using ubiquinone as an electron acceptor. Essential for the catalytic activity of complex I. The chain is NADH-ubiquinone oxidoreductase chain 3 from Osgoodomys banderanus (Michoacan deer mouse).